A 206-amino-acid polypeptide reads, in one-letter code: Imidazoleglycerol-phosphate dehydratase (206 aa).

This sequence belongs to the imidazoleglycerol-phosphate dehydratase family.

It localises to the cytoplasm. It catalyses the reaction D-erythro-1-(imidazol-4-yl)glycerol 3-phosphate = 3-(imidazol-4-yl)-2-oxopropyl phosphate + H2O. Its pathway is amino-acid biosynthesis; L-histidine biosynthesis; L-histidine from 5-phospho-alpha-D-ribose 1-diphosphate: step 6/9. This is Imidazoleglycerol-phosphate dehydratase from Saccharopolyspora erythraea (strain ATCC 11635 / DSM 40517 / JCM 4748 / NBRC 13426 / NCIMB 8594 / NRRL 2338).